The following is a 383-amino-acid chain: S-adenosylmethionine synthase 1 (383 aa).

His-15 contributes to the ATP binding site. Mg(2+) is bound at residue Asp-17. Glu-43 contributes to the K(+) binding site. Residues Glu-56 and Gln-99 each contribute to the L-methionine site. The tract at residues 99 to 109 (QSPDINLGVSR) is flexible loop. ATP is bound by residues 162–164 (DGK), 228–229 (RF), Asp-237, 243–244 (RK), Ala-260, and Lys-264. Asp-237 is an L-methionine binding site. Lys-268 provides a ligand contact to L-methionine.

This sequence belongs to the AdoMet synthase family. Homotetramer; dimer of dimers. Mg(2+) is required as a cofactor. It depends on K(+) as a cofactor.

Its subcellular location is the cytoplasm. It catalyses the reaction L-methionine + ATP + H2O = S-adenosyl-L-methionine + phosphate + diphosphate. The protein operates within amino-acid biosynthesis; S-adenosyl-L-methionine biosynthesis; S-adenosyl-L-methionine from L-methionine: step 1/1. Catalyzes the formation of S-adenosylmethionine (AdoMet) from methionine and ATP. The overall synthetic reaction is composed of two sequential steps, AdoMet formation and the subsequent tripolyphosphate hydrolysis which occurs prior to release of AdoMet from the enzyme. This Rhodopseudomonas palustris (strain BisB18) protein is S-adenosylmethionine synthase 1.